The primary structure comprises 506 residues: Maturase K (506 aa).

It belongs to the intron maturase 2 family. MatK subfamily.

Its subcellular location is the plastid. The protein resides in the chloroplast. Functionally, usually encoded in the trnK tRNA gene intron. Probably assists in splicing its own and other chloroplast group II introns. The chain is Maturase K from Jurinea cyanoides.